Consider the following 73-residue polypeptide: MPQIDIHPEWYNDSKVYCDGKHIMTIGSTKPELHVDIWSGNHPFFTGSQRIIDTEGRVERFMRKYNVQKTADT.

The protein belongs to the bacterial ribosomal protein bL31 family. Type A subfamily. In terms of assembly, part of the 50S ribosomal subunit.

It localises to the plastid. It is found in the chloroplast. Its function is as follows. Binds the 23S rRNA. The chain is Large ribosomal subunit protein bL31c from Palmaria palmata (Dulse).